A 402-amino-acid polypeptide reads, in one-letter code: MTMFMPTPSQFDPDERGHFGKFGGRFVPETLMPALLELESAYNELRFDREFWSEVDYYLKEYVGRPSPLYYAERLSDELGAKIYLKREDLNHTGAHKINNTVIQGLLAKRLGKKKIIAETGAGQHGVATATIAALLGLECEVFMGSKDTARQELNVFRMKLLSSKVQSVESGSKTLKDAMNEAIRHWVTHARDTFYIIGTVAGPHPYPMMVRDFQSVISFEAKKQILEKEERLPDYVIACIGGGSNAAGMFARFLDEESVRCIGIEAGGLGIESHHHGASLAKGSPGILHGQMSYLLQDSEGQIEEAYSISAGLDYPGIGPEHAYLFESGAAEYDHVTDAEALEAFVWLSQKEGIIPAFESAHAIAYLKKARERFKDKVVIVSLSGRGDKDMIQAKNLLNFH.

N6-(pyridoxal phosphate)lysine is present on lysine 97.

The protein belongs to the TrpB family. In terms of assembly, tetramer of two alpha and two beta chains. Pyridoxal 5'-phosphate is required as a cofactor.

It catalyses the reaction (1S,2R)-1-C-(indol-3-yl)glycerol 3-phosphate + L-serine = D-glyceraldehyde 3-phosphate + L-tryptophan + H2O. The protein operates within amino-acid biosynthesis; L-tryptophan biosynthesis; L-tryptophan from chorismate: step 5/5. Its function is as follows. The beta subunit is responsible for the synthesis of L-tryptophan from indole and L-serine. The protein is Tryptophan synthase beta chain 2 (trpB2) of Wolinella succinogenes (strain ATCC 29543 / DSM 1740 / CCUG 13145 / JCM 31913 / LMG 7466 / NCTC 11488 / FDC 602W) (Vibrio succinogenes).